Here is a 649-residue protein sequence, read N- to C-terminus: 1-deoxy-D-xylulose-5-phosphate synthase (649 aa).

Thiamine diphosphate contacts are provided by residues H73 and S114–A116. D145 provides a ligand contact to Mg(2+). Residues G146–A147, N175, Y286, and E367 each bind thiamine diphosphate. Residue N175 participates in Mg(2+) binding.

The protein belongs to the transketolase family. DXPS subfamily. Homodimer. Mg(2+) serves as cofactor. Requires thiamine diphosphate as cofactor.

The catalysed reaction is D-glyceraldehyde 3-phosphate + pyruvate + H(+) = 1-deoxy-D-xylulose 5-phosphate + CO2. Its pathway is metabolic intermediate biosynthesis; 1-deoxy-D-xylulose 5-phosphate biosynthesis; 1-deoxy-D-xylulose 5-phosphate from D-glyceraldehyde 3-phosphate and pyruvate: step 1/1. Catalyzes the acyloin condensation reaction between C atoms 2 and 3 of pyruvate and glyceraldehyde 3-phosphate to yield 1-deoxy-D-xylulose-5-phosphate (DXP). This is 1-deoxy-D-xylulose-5-phosphate synthase from Rhodococcus jostii (strain RHA1).